A 185-amino-acid polypeptide reads, in one-letter code: Large ribosomal subunit protein uL16m (185 aa).

The protein belongs to the universal ribosomal protein uL16 family.

The protein localises to the mitochondrion. The chain is Large ribosomal subunit protein uL16m (RPL16) from Oryza sativa subsp. japonica (Rice).